The following is a 221-amino-acid chain: Lipoprotein-releasing system ATP-binding protein LolD (221 aa).

Residues 6-220 (LTLKNVSKHY…YKLKHGALNM (215 aa)) form the ABC transporter domain. Residue 42–49 (GSSGSGKS) participates in ATP binding.

It belongs to the ABC transporter superfamily. Lipoprotein translocase (TC 3.A.1.125) family. As to quaternary structure, the complex is composed of two ATP-binding proteins (LolD) and two transmembrane proteins (LolC and LolE).

It is found in the cell inner membrane. In terms of biological role, part of the ABC transporter complex LolCDE involved in the translocation of mature outer membrane-directed lipoproteins, from the inner membrane to the periplasmic chaperone, LolA. Responsible for the formation of the LolA-lipoprotein complex in an ATP-dependent manner. The polypeptide is Lipoprotein-releasing system ATP-binding protein LolD (Rickettsia bellii (strain RML369-C)).